The sequence spans 631 residues: Probable potassium transport system protein Kup (631 aa).

Helical transmembrane passes span 17–37 (IGLL…SPLY), 56–76 (ILGV…FKYM), 109–129 (MMMV…SMIT), 147–167 (GLDH…FLIQ), 174–194 (IGVL…ALGV), 215–235 (FFII…LALT), 256–276 (WFIL…ALVL), 288–308 (LLAP…ATII), 346–366 (IYIG…VIGF), 378–398 (VAVT…MLML), 403–423 (PLLA…FFAA), and 428–448 (IFQG…LMTT).

It belongs to the HAK/KUP transporter (TC 2.A.72) family.

Its subcellular location is the cell inner membrane. It catalyses the reaction K(+)(in) + H(+)(in) = K(+)(out) + H(+)(out). Transport of potassium into the cell. Likely operates as a K(+):H(+) symporter. This is Probable potassium transport system protein Kup from Pseudomonas savastanoi pv. phaseolicola (strain 1448A / Race 6) (Pseudomonas syringae pv. phaseolicola (strain 1448A / Race 6)).